Consider the following 309-residue polypeptide: Methionyl-tRNA formyltransferase (309 aa).

109-112 lines the (6S)-5,6,7,8-tetrahydrofolate pocket; it reads SLLP.

The protein belongs to the Fmt family.

The catalysed reaction is L-methionyl-tRNA(fMet) + (6R)-10-formyltetrahydrofolate = N-formyl-L-methionyl-tRNA(fMet) + (6S)-5,6,7,8-tetrahydrofolate + H(+). Its function is as follows. Attaches a formyl group to the free amino group of methionyl-tRNA(fMet). The formyl group appears to play a dual role in the initiator identity of N-formylmethionyl-tRNA by promoting its recognition by IF2 and preventing the misappropriation of this tRNA by the elongation apparatus. The polypeptide is Methionyl-tRNA formyltransferase (Clostridium novyi (strain NT)).